The chain runs to 874 residues: Adhesion G-protein coupled receptor D1 (874 aa).

The signal sequence occupies residues 1–25 (MEKLLRLCCWYSWLLLFYYNFQVRG). Topologically, residues 26 to 567 (VYSRSQDHPG…LARGHQVALS (542 aa)) are extracellular. The Pentraxin (PTX) domain maps to 79–276 (KGVTLLYYGR…ASPVMPTDAY (198 aa)). 9 N-linked (GlcNAc...) asparagine glycosylation sites follow: Asn-90, Asn-185, Asn-282, Asn-302, Asn-319, Asn-394, Asn-476, Asn-501, and Asn-533. The 187-residue stretch at 371–557 (QVTVEGSSAM…AILMQVVPLE (187 aa)) folds into the GAIN-B domain. Disulfide bonds link Cys-510–Cys-539 and Cys-527–Cys-541. A GPS region spans residues 510-557 (CAFLDFSSGEGVWSNHGCALTRGNLTYSVCRCTHLTNFAILMQVVPLE). Residues 546 to 554 (NFAILMQVV) form a stachel region. Residue Gln-563 coordinates 17beta-hydroxy-5alpha-androstan-3-one. The helical transmembrane segment at 568–590 (SISYVGCSLSVLCLVATLVTFAV) threads the bilayer. The Cytoplasmic portion of the chain corresponds to 591 to 601 (LSSVSTIRNQR). The chain crosses the membrane as a helical span at residues 602 to 623 (YHIHANLSFAVLVAQVLLLISF). The Extracellular portion of the chain corresponds to 624 to 632 (RLEPGTTPC). An intrachain disulfide couples Cys-632 to Cys-704. A helical transmembrane segment spans residues 633–655 (QVMAVLLHYFFLSAFAWMLVEGL). Topologically, residues 656–673 (HLYSMVIKVFGSEDSKHR) are cytoplasmic. Residues 674 to 695 (YYYGMGWGFPLLICIISLSFAM) traverse the membrane as a helical segment. Residues 696–710 (DSYGTSNNCWLSLAS) are Extracellular-facing. Residues 711-732 (GAIWAFVAPALFVIVVNIGILI) form a helical membrane-spanning segment. Topologically, residues 733 to 757 (AVTRVISQISADNYKIHGDPSAFKL) are cytoplasmic. A helical transmembrane segment spans residues 758-780 (TAKAVAVLLPILGTSWVFGVLAV). Over 781–783 (NGC) the chain is Extracellular. A helical membrane pass occupies residues 784–810 (AVVFQYMFATLNSLQGLFIFLFHCLLN). Asn-795 lines the 17beta-hydroxy-5alpha-androstan-3-one pocket. Residues 811-874 (SEVRAAFKHK…SAHRVDLSAV (64 aa)) lie on the Cytoplasmic side of the membrane. The segment at 854–874 (TKLSPWDKSSHSAHRVDLSAV) is disordered. Residues 861 to 874 (KSSHSAHRVDLSAV) show a composition bias toward basic and acidic residues.

The protein belongs to the G-protein coupled receptor 2 family. Adhesion G-protein coupled receptor (ADGR) subfamily. As to quaternary structure, heterodimer of 2 chains generated by proteolytic processing; the large extracellular N-terminal fragment and the membrane-bound C-terminal fragment predominantly remain associated and non-covalently linked. Interacts with ESYT1; interaction takes place in absence of cytosolic calcium and inhibits the G protein-coupled receptor activity of ADGRD1. Post-translationally, autoproteolytically processed at the GPS region of the GAIN-B domain; this cleavage modulates receptor activity. Cleavage takes place early in the secretory pathway before N-glycosylation. In terms of tissue distribution, up-regulated in CD133(+) cell population of glioblastoma.

It localises to the cell membrane. With respect to regulation, forms a heterodimer of 2 chains generated by proteolytic processing that remain associated through non-covalent interactions mediated by the GAIN-B domain. In the inactivated receptor, the Stachel sequence (also named stalk) is embedded in the GAIN-B domain, where it adopts a beta-strand conformation. On activation, the Stachel moves into the 7 transmembrane region and adopts a twisted hook-shaped configuration that forms contacts within the receptor, leading to coupling of a G-alpha protein, which activates signaling. The cleaved GAIN-B and N-terminal domains can then dissociate from the rest of the receptor. Interaction with ESYT1 in absence of cytosolic calcium inhibits the G protein-coupled receptor activity; interaction and inhibition is relieved when cytosolic calcium increases. Activated by AP503, a small molecule that activates ADGRD1 without activating androgen nuclear receptors: AP503 enhances muscle strength without eliciting androgenic adverse effects. Activated by the 8E3E8 antibody that targets the N-terminus. In terms of biological role, adhesion G-protein coupled receptor (aGPCR) for androgen hormone 5alpha-dihydrotestosterone (5alpha-DHT), also named 17beta-hydroxy-5alpha-androstan-3-one, the most potent hormone among androgens. Also activated by methenolone drug. Ligand binding causes a conformation change that triggers signaling via guanine nucleotide-binding proteins (G proteins) and modulates the activity of downstream effectors, such as adenylate cyclase. ADGRD1 is coupled to G(s) G proteins and mediates activation of adenylate cyclase activity. Acts as a 5alpha-DHT receptor in muscle cells, thereby increasing intracellular cyclic AMP (cAMP) levels and enhancing muscle strength. The sequence is that of Adhesion G-protein coupled receptor D1 from Homo sapiens (Human).